A 494-amino-acid chain; its full sequence is Probable malate:quinone oxidoreductase 3 (494 aa).

It belongs to the MQO family. Requires FAD as cofactor.

It catalyses the reaction (S)-malate + a quinone = a quinol + oxaloacetate. Its pathway is carbohydrate metabolism; tricarboxylic acid cycle; oxaloacetate from (S)-malate (quinone route): step 1/1. The sequence is that of Probable malate:quinone oxidoreductase 3 from Staphylococcus epidermidis (strain ATCC 35984 / DSM 28319 / BCRC 17069 / CCUG 31568 / BM 3577 / RP62A).